Reading from the N-terminus, the 330-residue chain is Methionyl-tRNA formyltransferase (330 aa).

116–119 (SLLP) contacts (6S)-5,6,7,8-tetrahydrofolate.

Belongs to the Fmt family.

It catalyses the reaction L-methionyl-tRNA(fMet) + (6R)-10-formyltetrahydrofolate = N-formyl-L-methionyl-tRNA(fMet) + (6S)-5,6,7,8-tetrahydrofolate + H(+). Functionally, attaches a formyl group to the free amino group of methionyl-tRNA(fMet). The formyl group appears to play a dual role in the initiator identity of N-formylmethionyl-tRNA by promoting its recognition by IF2 and preventing the misappropriation of this tRNA by the elongation apparatus. This is Methionyl-tRNA formyltransferase from Nitratidesulfovibrio vulgaris (strain DP4) (Desulfovibrio vulgaris).